Here is a 424-residue protein sequence, read N- to C-terminus: Glutamyl-tRNA reductase (424 aa).

Residues 49–52 (TCNR), S105, 110–112 (EPQ), and Q116 contribute to the substrate site. C50 functions as the Nucleophile in the catalytic mechanism. 185–190 (GSGETA) contacts NADP(+).

It belongs to the glutamyl-tRNA reductase family. As to quaternary structure, homodimer.

It carries out the reaction (S)-4-amino-5-oxopentanoate + tRNA(Glu) + NADP(+) = L-glutamyl-tRNA(Glu) + NADPH + H(+). The protein operates within porphyrin-containing compound metabolism; protoporphyrin-IX biosynthesis; 5-aminolevulinate from L-glutamyl-tRNA(Glu): step 1/2. Catalyzes the NADPH-dependent reduction of glutamyl-tRNA(Glu) to glutamate 1-semialdehyde (GSA). This Legionella pneumophila (strain Corby) protein is Glutamyl-tRNA reductase.